The sequence spans 564 residues: MTNVVETIKKQINEVVKNSISKAVQNGELPQFTVDELFIEIPKEKGHGDFSTNIAMQAAKTVRKAPRQVAEIIIKNMDLSNTYIDRVEAAGPGFINFFLTNAWLYDVLKVIQKEKENYGNLDIGRGQKVMVEFVSANPTGPLHMGNARGGALGDCIASVLEKAGYDVTREFYINDAGNQIEKFGISLEARYIQLLKGEDAVEFPEDGYHGEDIIDHMKAYIEENGDNLLYVDSEERRKTLVEYALPKNIERIRKSLENYGVVFDVWFSEQSLYDNGEVRETLDILKEKGYTFEKDGAVWFKASALGAEKDEVIVRNNGIPTYFAADIAYHRNKFLKRKFDRVINLLGADHHGHAARMKCALKAFDIDPDKLDIVIFQLVRLYRNGEIARMSKRTGRAISLDDLLEEVGRDAARFFFNTKASGSHLDFDLDLAVKKSNENPVYYVQYAYARSCSMLRLLESEGFKVPDVDSVDLTVLKAPEEIELMKKLSEYPEEIRISAQTLEPSRLTRYVLDVASNFHSFYNACRVKGEEENLMYARMILVDSTRLVIKNVLDVLSITAPEKM.

The 'HIGH' region motif lies at 136–146 (ANPTGPLHMGN).

Belongs to the class-I aminoacyl-tRNA synthetase family. As to quaternary structure, monomer.

It is found in the cytoplasm. The enzyme catalyses tRNA(Arg) + L-arginine + ATP = L-arginyl-tRNA(Arg) + AMP + diphosphate. This chain is Arginine--tRNA ligase, found in Acetivibrio thermocellus (strain ATCC 27405 / DSM 1237 / JCM 9322 / NBRC 103400 / NCIMB 10682 / NRRL B-4536 / VPI 7372) (Clostridium thermocellum).